A 586-amino-acid chain; its full sequence is Laccase-9 (586 aa).

The N-terminal stretch at 1–25 is a signal peptide; that stretch reads MPRVHHSLSNQAFLVLLLFSSIASA. 2 consecutive Plastocyanin-like domains span residues 33–149 and 159–307; these read HVKD…PRSG and KEVP…YEGA. N-linked (GlcNAc...) asparagine glycans are attached at residues N52, N74, and N79. Positions 83 and 85 each coordinate Cu cation. N111 carries N-linked (GlcNAc...) asparagine glycosylation. Residues H128 and H130 each coordinate Cu cation. N-linked (GlcNAc...) asparagine glycans are attached at residues N236, N333, N385, N403, and N451. Residues 411 to 552 form the Plastocyanin-like 3 domain; the sequence is DFPDQPPLKF…MMAFIVQNGP (142 aa). 7 residues coordinate Cu cation: H469, H472, H474, H531, C532, H533, and H537.

The protein belongs to the multicopper oxidase family. It depends on Cu cation as a cofactor. As to expression, predominantly expressed in roots.

It localises to the secreted. The protein resides in the extracellular space. The protein localises to the apoplast. It carries out the reaction 4 hydroquinone + O2 = 4 benzosemiquinone + 2 H2O. Lignin degradation and detoxification of lignin-derived products. The chain is Laccase-9 (LAC9) from Arabidopsis thaliana (Mouse-ear cress).